Reading from the N-terminus, the 372-residue chain is NAD(P)H-quinone oxidoreductase subunit 1 (372 aa).

Transmembrane regions (helical) follow at residues I27–V47, I97–V117, V128–M148, L176–V196, I204–L224, I266–V286, S308–L328, and F347–P367.

It belongs to the complex I subunit 1 family. As to quaternary structure, NDH-1 is composed of at least 11 different subunits.

It localises to the cellular thylakoid membrane. The catalysed reaction is a plastoquinone + NADH + (n+1) H(+)(in) = a plastoquinol + NAD(+) + n H(+)(out). The enzyme catalyses a plastoquinone + NADPH + (n+1) H(+)(in) = a plastoquinol + NADP(+) + n H(+)(out). NDH-1 shuttles electrons from an unknown electron donor, via FMN and iron-sulfur (Fe-S) centers, to quinones in the respiratory and/or the photosynthetic chain. The immediate electron acceptor for the enzyme in this species is believed to be plastoquinone. Couples the redox reaction to proton translocation, and thus conserves the redox energy in a proton gradient. This Prochlorococcus marinus (strain MIT 9515) protein is NAD(P)H-quinone oxidoreductase subunit 1.